The sequence spans 130 residues: uncharacterized protein (130 aa).

A signal peptide spans 1 to 20 (MFNCLTKLVILVCLKYVAKA).

This is an uncharacterized protein from Saccharomyces cerevisiae (strain ATCC 204508 / S288c) (Baker's yeast).